Here is a 235-residue protein sequence, read N- to C-terminus: MDIKLKDFEGPLDLLLHLVSKYEVDIYDVPIVEVIEQYLAYIATLQAMRLEVAGEYMLMASQLMLIKSRNLLPKVVESNPIEDDPEMELLSQLEEYRRFKVLSEELANQHQERAKYFSKPKQEVIFEDAILLHDKSVMDLFLTFSQMMSQKQKELSNSQTVIEKEDYRIEDMMIVIERHFNLKKKTTLQEVFADCQTKSEMITLFLAMLELIKLHQITVEQDSNFSQVILRKEEK.

Belongs to the ScpA family. In terms of assembly, component of a cohesin-like complex composed of ScpA, ScpB and the Smc homodimer, in which ScpA and ScpB bind to the head domain of Smc. The presence of the three proteins is required for the association of the complex with DNA.

The protein resides in the cytoplasm. Participates in chromosomal partition during cell division. May act via the formation of a condensin-like complex containing Smc and ScpB that pull DNA away from mid-cell into both cell halves. This is Segregation and condensation protein A from Streptococcus agalactiae serotype Ia (strain ATCC 27591 / A909 / CDC SS700).